We begin with the raw amino-acid sequence, 71 residues long: Plasticin-C1 (71 aa).

The N-terminal stretch at 1-22 is a signal peptide; that stretch reads MAFLKKSLLLVLFLGLVSLSIC. Residues 23–45 constitute a propeptide that is removed on maturation; it reads EEEKRENEDEEKQEDDDQSENKR. A disordered region spans residues 25-46; the sequence is EKRENEDEEKQEDDDQSENKRG. Positions 30-40 are enriched in acidic residues; that stretch reads EDEEKQEDDDQ. Asn-68 is modified (asparagine amide). The propeptide occupies 70 to 71; that stretch reads ES.

It belongs to the frog skin active peptide (FSAP) family. Plasticin subfamily. Expressed by the skin glands.

It is found in the secreted. The protein localises to the target cell membrane. Its function is as follows. Neutral peptide with no antimicrobial activity. May act in synergy with cationic peptides by enhancing their activity. Has a moderate hemolytic activity. The protein is Plasticin-C1 of Agalychnis callidryas (Red-eyed tree frog).